A 116-amino-acid chain; its full sequence is Putative iron-sulfur cluster insertion protein ErpA (116 aa).

Residues Cys-44, Cys-108, and Cys-110 each coordinate iron-sulfur cluster.

It belongs to the HesB/IscA family. Homodimer. Requires iron-sulfur cluster as cofactor.

Its function is as follows. Required for insertion of 4Fe-4S clusters. The chain is Putative iron-sulfur cluster insertion protein ErpA from Aromatoleum aromaticum (strain DSM 19018 / LMG 30748 / EbN1) (Azoarcus sp. (strain EbN1)).